A 331-amino-acid polypeptide reads, in one-letter code: Porphobilinogen deaminase (331 aa).

Cysteine 248 bears the S-(dipyrrolylmethanemethyl)cysteine mark. Positions 307 to 331 are disordered; it reads QLLQAPKQTGEPHDPDRHDKGTGRP. The segment covering 316–331 has biased composition (basic and acidic residues); the sequence is GEPHDPDRHDKGTGRP.

Belongs to the HMBS family. Monomer. Dipyrromethane is required as a cofactor.

The catalysed reaction is 4 porphobilinogen + H2O = hydroxymethylbilane + 4 NH4(+). It participates in porphyrin-containing compound metabolism; protoporphyrin-IX biosynthesis; coproporphyrinogen-III from 5-aminolevulinate: step 2/4. Functionally, tetrapolymerization of the monopyrrole PBG into the hydroxymethylbilane pre-uroporphyrinogen in several discrete steps. This Acidothermus cellulolyticus (strain ATCC 43068 / DSM 8971 / 11B) protein is Porphobilinogen deaminase.